The sequence spans 1371 residues: MALKKEQHFFKGMQRDLSVSKFNPEYAFDAQNIRITAREHDTLLSVSNEKGNKEIPLQSPSGDPVVIDGVLLGQNVLNNYVTLFTKGTNDNIYRLENKGTYFETLILFSGNLNFSTDYPIESISVYENNNIQKVYWVDGLNQARVINITKDDYNNADDFDFVGTIHTSSKIEVSKVNGSGAFGQGVIQYAFTYYNKYGKETNIFRTSPLLYIAYSDRGASPEETVSCSFQINFTELDSSYDFIRVYSIHRTSIDATPTVRKVADLATDTKLYVDTGTTGEIVDPTLLLYVGGEEIAPYTMTQKDNTLFLGNYTLKRSLISTELKNQIKSDSIVTTILGGLDDAIESEWNVNTQYNSNYDLNYDSRIKGFQKGEIYRLGIQFQDNKGKWSEVVFIGDYECTERFKYTQYDTYGITLIPRFKVVISNSTTIQAIKNLGYINARGVVVFPTLEDRNILCQGILCPTVANYKDRLDNSPFVQSSWFSRPKQATETWKTEYSGTNHLSEFGEVPYFQHNEPIGSASLSEITRWEIQTSLGLVPYYNPSTTNAKDFVDGSPSEFLVDENIVTMHSPDVEFDDRLQNITNGKFKLRIIGTTHLTNTLSDISVITSTPTYGNYATGFYKGKVANMNISTSYYGGRQLSAGLFWSDNVKFQDPSPQDKLERLWMVYPWHRNGSLMNMGVPTEGTRAAALQRKIISNLKFASQNNYLPNQSVWEAEISGDANHTGITPVNSWTEGLVRIPAQANSNLGSLNYYANIDKVLTFNRSEQISEIYKNGYLIYTTKDWITDGKIADLFNNAISQTISVDQVQDWLTRIADTDKYGTEPVSMKYKSNPHLVFAFNYTESGKQLILPMKNNNNGYLAPSANSKPFWNPTAPEGAVYQDSINFTNENRAFFWLAELYRDSVVNRFGGDTEEAILNNTWLPSGDSVIIGDSINIEYTEGDTYYQRYDCLRTFAYTNEDQNSIVDIVSFMCESKVNIDGRYDKNRGQVNNLAVSPTNFNLFNPVYSQKNNFFTFRTIDYERFSINYFPNSITVTKEKSLGEDIDTWTNITLATTLDLDGDKGEIVSLNTYNNEIFCFQRRGLSNILFNSRVQIPTSDGMPIEITNGLKVSGKRYISNTIGCANKWSIAESPSGLYFIDNETNSLYLFNGEIVSLSDKLGFRQWISTHNVHVNWEPVGYNNYRSFYDKNNNDVYFTYKDHCLCYSELINQFTSFMSYEGVPAMFNVSSEFYAFKDGKMWEQFAGDYNMFFGEYKPFSITFVANAEEPNDKIFNTVEFRADSWDSDNLISNKTFDTLDVWNEYQHGTTPLTNLLGHPSPLKKKFRIWRANIPRAIANNRDRIRNTWAYIKLGMNTPNTYRTEFHDAIIHYFA.

As to quaternary structure, homohexamer.

The protein resides in the virion. In terms of biological role, forms the muzzle assembly at the distal part of the tail. May serve as the gatekeeper to control the ejection of the cargo proteins. The polypeptide is Muzzle protein (Bacteroides intestinalis (Bacteroides phage PhiCrAss001)).